The following is a 331-amino-acid chain: Zinc finger protein 660 (331 aa).

The span at 1-12 shows a compositional bias: basic residues; that stretch reads MRRKTRNFKHKT. The interval 1 to 35 is disordered; sequence MRRKTRNFKHKTVKDNKVLTEGSDQESEKDNSQCC. Ser-23 is subject to Phosphoserine. 10 C2H2-type zinc fingers span residues 50 to 72, 78 to 100, 106 to 128, 134 to 156, 162 to 184, 190 to 212, 218 to 240, 246 to 268, 274 to 296, and 302 to 324; these read YVCTECGKAFSQSANLTVHERIH, YKCKECGKAFSHSSNLVVHRRIH, YTCSECGKSFSGKSHLIRHQGIH, YECKECGKAFSRSSGLISHHRVH, YSCIECGKAFSRSSNLTQHQRMH, YKCKECGKTCGSNTKIMDHQRIH, YECDECGKTFILRKTLNEHQRLH, YKCNECGKAFTSNRNLVDHQRVH, YKCNECGKTFRQTSQVILHLRTH, and YKCSECGKAYRYSSQLIQHQRKH.

This sequence belongs to the krueppel C2H2-type zinc-finger protein family.

Its subcellular location is the nucleus. Its function is as follows. May be involved in transcriptional regulation. This Homo sapiens (Human) protein is Zinc finger protein 660 (ZNF660).